The following is a 1157-amino-acid chain: ATP-dependent helicase/deoxyribonuclease subunit B (1157 aa).

The 277-residue stretch at 1-277 (MTLQIIAGKS…KLFLENKRAK (277 aa)) folds into the UvrD-like helicase ATP-binding domain. 8-15 (GKSGTGKT) contributes to the ATP binding site. The UvrD-like helicase C-terminal domain occupies 272–578 (ENKRAKSDSL…EFSLLPPSLD (307 aa)). [4Fe-4S] cluster-binding residues include Cys-794, Cys-1115, Cys-1118, and Cys-1124.

Belongs to the helicase family. AddB/RexB type 1 subfamily. In terms of assembly, heterodimer of AddA and AddB. Mg(2+) is required as a cofactor. [4Fe-4S] cluster serves as cofactor.

Its function is as follows. The heterodimer acts as both an ATP-dependent DNA helicase and an ATP-dependent, dual-direction single-stranded exonuclease. Recognizes the chi site generating a DNA molecule suitable for the initiation of homologous recombination. The AddB subunit has 5' -&gt; 3' nuclease activity but not helicase activity. The polypeptide is ATP-dependent helicase/deoxyribonuclease subunit B (Listeria welshimeri serovar 6b (strain ATCC 35897 / DSM 20650 / CCUG 15529 / CIP 8149 / NCTC 11857 / SLCC 5334 / V8)).